Consider the following 216-residue polypeptide: Redox-sensing transcriptional repressor Rex (216 aa).

Residues 15–54 (KYLRVTQQLIEEGRDAVSSKELGDFTGINPVQVRRDLNAI) constitute a DNA-binding region (H-T-H motif). Residue 89 to 94 (GAGNLG) participates in NAD(+) binding.

This sequence belongs to the transcriptional regulatory Rex family. Homodimer.

The protein localises to the cytoplasm. Its function is as follows. Modulates transcription in response to changes in cellular NADH/NAD(+) redox state. The chain is Redox-sensing transcriptional repressor Rex from Rubrobacter xylanophilus (strain DSM 9941 / JCM 11954 / NBRC 16129 / PRD-1).